A 585-amino-acid polypeptide reads, in one-letter code: Arginine--tRNA ligase (585 aa).

The 'HIGH' region motif lies at 131–141 (ANPTGPMHVGH).

The protein belongs to the class-I aminoacyl-tRNA synthetase family. Monomer.

It localises to the cytoplasm. It carries out the reaction tRNA(Arg) + L-arginine + ATP = L-arginyl-tRNA(Arg) + AMP + diphosphate. This Brucella suis (strain ATCC 23445 / NCTC 10510) protein is Arginine--tRNA ligase.